The following is a 504-amino-acid chain: Xylose import ATP-binding protein XylG (504 aa).

ABC transporter domains lie at Leu5–Glu242 and Leu259–Ala500. Gly37–Ser44 serves as a coordination point for ATP.

This sequence belongs to the ABC transporter superfamily. Xylose importer (TC 3.A.1.2.4) family. As to quaternary structure, the complex is composed of two ATP-binding proteins (XylG), two transmembrane proteins (XylH) and a solute-binding protein (XylF).

It localises to the cell inner membrane. The enzyme catalyses D-xylose(out) + ATP + H2O = D-xylose(in) + ADP + phosphate + H(+). Part of the ABC transporter complex XylFGH involved in xylose import. Responsible for energy coupling to the transport system. In Histophilus somni (strain 129Pt) (Haemophilus somnus), this protein is Xylose import ATP-binding protein XylG.